A 644-amino-acid polypeptide reads, in one-letter code: uncharacterized protein (644 aa).

Positions 1–35 (MKANGLDNDPARTGMERTDIDSEHPEAQPLLNNNH) are disordered. Over 1–90 (MKANGLDNDP…ILNILILINT (90 aa)) the chain is Cytoplasmic. The span at 14–26 (GMERTDIDSEHPE) shows a compositional bias: basic and acidic residues. Phosphoserine occurs at positions 22, 56, and 63. Residues 91-111 (IWLVTTLISDFFFNINILFGF) form a helical membrane-spanning segment. Over 112–122 (SNRYASFNDLT) the chain is Vacuolar. Residues 123 to 143 (LIFISIIANSFNLWFNKLGLY) form a helical membrane-spanning segment. Residues 144-147 (SALD) lie on the Cytoplasmic side of the membrane. A helical transmembrane segment spans residues 148 to 168 (YSLNVTLCVLTLFNLALTYLI). Residues 169–174 (KYTRQR) lie on the Vacuolar side of the membrane. A helical transmembrane segment spans residues 175–195 (IGFVGTFTYLWTSFSFFIGAI). Residues 196–271 (LDWYLLFYNN…EWVSIGFRNT (76 aa)) lie on the Cytoplasmic side of the membrane. The interval 225-251 (NENHTNSTENRDRSQYGSGSPTPTHRS) is disordered. Residues 239–251 (QYGSGSPTPTHRS) show a composition bias toward polar residues. Position 244 is a phosphoserine (Ser-244). The chain crosses the membrane as a helical span at residues 272-292 (IKFLILIFFALFTLNTLLTTL). The Vacuolar segment spans residues 293–644 (DTYRLTHKLP…IGELGKLTED (352 aa)). One can recognise an AB hydrolase-1 domain in the interval 348–619 (PIILFEHGGY…IVEGGHEIYK (272 aa)). The tract at residues 469 to 492 (GRGDGDDGDDGNGNDGDGRNHDKT) is disordered.

It is found in the vacuole membrane. This is an uncharacterized protein from Saccharomyces cerevisiae (strain ATCC 204508 / S288c) (Baker's yeast).